A 274-amino-acid chain; its full sequence is Thiamine kinase (274 aa).

The protein belongs to the thiamine kinase family.

It carries out the reaction thiamine + ATP = thiamine phosphate + ADP + H(+). The protein operates within cofactor biosynthesis; thiamine diphosphate biosynthesis; thiamine phosphate from thiamine: step 1/1. Its function is as follows. Catalyzes the ATP-dependent phosphorylation of thiamine to thiamine phosphate. Is involved in thiamine salvage. This chain is Thiamine kinase, found in Salmonella paratyphi A (strain ATCC 9150 / SARB42).